A 255-amino-acid polypeptide reads, in one-letter code: MSKRIVVISDTQIPFDDRKQLKAVIGYIGDTQPDEVVHIGDLMDYPSPSRWTKGTKEEFAQRIKPDSEQCKRRFLEPLRQVYDGPVGVHEGNHDRRPVDYLHQFAPALVEYVSSFQFQNLLDFDGFGVDVLPEFYKIAPGWISTHGHRGGVRVTQKSADTAYNAMMRFGTSVIIGHTHRQGIKPHTLGYGGNQKVLWSMEVGNLMNMKLAQYLKGATANWQSGFALLTVDGQHVKPELVPIVGGRFSVDGRVWEV.

The protein is Gene 54 protein (54) of Mycobacterium (Mycobacteriophage L5).